The sequence spans 305 residues: MPGFTCCVPGCYNNSHRDKALHFYTFPKDAELRRLWLKNVSRAGVSGCFSTFQPTTGHRLCSVHFQGGRKTYTVRVPTIFPLRGVNERKVARRPAGAAAARRRQQQQQQQQQQQQQQQLQQQQPSPSSSTAQTTQLQPNLVSASAAVLLTLQAAVDSNQAPGSVVPVSTTPSGDDVKPIDLTVQVEFAAAEGAAAAAAASELEAATAGLEAAECTLGPQLVVVGEEGFPDTGSDHSYSLSSGTTEEELLRKLNEQRDILALMEVKMKEMKGSIRHLRLTEAKLREELREKDRLLAMAVIRKKHGM.

A THAP-type zinc finger spans residues 1 to 80 (MPGFTCCVPG…TYTVRVPTIF (80 aa)). Residues 85–135 (VNERKVARRPAGAAAARRRQQQQQQQQQQQQQQQLQQQQPSPSSSTAQTTQ) are disordered. The span at 105–135 (QQQQQQQQQQQQQQLQQQQPSPSSSTAQTTQ) shows a compositional bias: low complexity. The HCFC1-binding motif (HBM) signature appears at 234 to 237 (DHSY). The stretch at 246-296 (EELLRKLNEQRDILALMEVKMKEMKGSIRHLRLTEAKLREELREKDRLLAM) forms a coiled coil.

Belongs to the THAP11 family. In terms of assembly, forms homodimers. Interacts via HBM with HCFC1. Forms a complex with HCFC1 and ZNF143. In terms of tissue distribution, mainly expressed in embryonic pluripotent cells. In adult tissues, expressed in oocytes and in certain regions of the brain,including hippocampus, olfactory bulb and Purkinje cells.

The protein localises to the nucleus. It localises to the cytoplasm. Its function is as follows. Transcriptional repressor that plays a central role for embryogenesis and the pluripotency of embryonic stem (ES) cells. Sequence-specific DNA-binding factor that represses gene expression in pluripotent ES cells by directly binding to key genetic loci and recruiting epigenetic modifiers. Required for normal brain development and neural precursor differentiation. In terms of biological role, transcription factor, which has both transcriptional activation and repression activities. Also modulates chromatin accessibility. In complex with HCFC1 and ZNF143, regulates the expression of several genes, including AP2S1, ESCO2, OPHN1, RBL1, UBXN8 and ZNF32. May regulate the expression of genes that encode both cytoplasmic and mitochondrial ribosomal proteins. Required for normal mitochondrial development and function. Regulates mitochondrial gene expression, including that of components of the electron transport chain. Involved in the maintainance of pluripotency in early embryonic cells, possibly through its action on mitochondrial maturation which is required to meet high energy demands of these cells. Required for early development of retina, preventing premature exit of retinal progenitor cells from the cell cycle. This effect may also be mediated by its action on mitochondria. Through the regulation of MMACHC gene expression, controls cobalamin metabolism. Required for normal brain development and neural precursor differentiation. Involved in cell growth. The protein is THAP domain-containing protein 11 (Thap11) of Mus musculus (Mouse).